The chain runs to 197 residues: Prefoldin subunit 3 (197 aa).

The residue at position 2 (Ala-2) is an N-acetylalanine. Lys-59 bears the N6-acetyllysine mark.

The protein belongs to the prefoldin subunit alpha family. Heterohexamer of two PFD-alpha type and four PFD-beta type subunits. Binds to the C-terminal part of VHL. In terms of tissue distribution, ubiquitous.

The protein localises to the cytoplasm. Its subcellular location is the nucleus. Binds specifically to cytosolic chaperonin (c-CPN) and transfers target proteins to it. Binds to nascent polypeptide chain and promotes folding in an environment in which there are many competing pathways for nonnative proteins. The chain is Prefoldin subunit 3 (VBP1) from Homo sapiens (Human).